Here is a 137-residue protein sequence, read N- to C-terminus: Large ribosomal subunit protein uL16 (137 aa).

The protein belongs to the universal ribosomal protein uL16 family. In terms of assembly, part of the 50S ribosomal subunit.

Binds 23S rRNA and is also seen to make contacts with the A and possibly P site tRNAs. In Streptococcus pneumoniae serotype 2 (strain D39 / NCTC 7466), this protein is Large ribosomal subunit protein uL16.